Reading from the N-terminus, the 505-residue chain is Maturase K (505 aa).

Belongs to the intron maturase 2 family. MatK subfamily.

The protein localises to the plastid. The protein resides in the chloroplast. Its function is as follows. Usually encoded in the trnK tRNA gene intron. Probably assists in splicing its own and other chloroplast group II introns. In Sciadopitys verticillata (Japanese umbrella-pine), this protein is Maturase K.